The following is a 321-amino-acid chain: Acyl-CoA 5-desaturase AL21 (321 aa).

2 helical membrane passes run 42–62 (IFHIILVGGLHVLCLSAPFTF) and 64–84 (WSAFWLSLTLYAVCGVFGTTL). Fe cation-binding residues include His-87, His-92, His-124, His-127, and His-128. A Histidine box-1 motif is present at residues 87-92 (HRNLTH). Positions 124 to 128 (HRYHH) match the Histidine box-2 motif. The helical transmembrane segment at 190–210 (LQAALLYMFGGFPFIVWGMAV) threads the bilayer. Fe cation contacts are provided by His-227, His-256, His-259, and His-260. A Histidine box-3 motif is present at residues 256–260 (HNNHH).

It belongs to the fatty acid desaturase type 1 family. Fe(2+) serves as cofactor.

It is found in the membrane. It carries out the reaction (11Z,14Z)-eicosadienoyl-CoA + AH2 + O2 = (5Z,11Z,14Z)-eicosatrienoyl-CoA + A + 2 H2O. It catalyses the reaction (11Z,14Z,17Z)-eicosatrienoyl-CoA + AH2 + O2 = (5Z,11Z,14Z,17Z)-eicosatetraenoyl-CoA + A + 2 H2O. Its pathway is lipid metabolism; polyunsaturated fatty acid biosynthesis. Functionally, catalyzes the desaturation of 20:2Delta(11,14) and 20:3Delta(11,14,17) to generate sciadonic acid (20:3Delta(5,11,14)) and juniperonic acid (20:4Delta(5,11,14,17)). The enzyme can also use 16:0 and 18:0 as substrates. The polypeptide is Acyl-CoA 5-desaturase AL21 (Anemone leveillei (Windflower)).